The following is a 117-amino-acid chain: Large ribosomal subunit protein uL18 (117 aa).

It belongs to the universal ribosomal protein uL18 family. In terms of assembly, part of the 50S ribosomal subunit; part of the 5S rRNA/L5/L18/L25 subcomplex. Contacts the 5S and 23S rRNAs.

Functionally, this is one of the proteins that bind and probably mediate the attachment of the 5S RNA into the large ribosomal subunit, where it forms part of the central protuberance. In Mannheimia succiniciproducens (strain KCTC 0769BP / MBEL55E), this protein is Large ribosomal subunit protein uL18.